A 1257-amino-acid chain; its full sequence is RAF-like serine/threonine-protein kinase 24 (1257 aa).

Residues Met-1–Gly-21 form a disordered region. Residues Pro-191–Ser-277 enclose the PB1 domain. Basic and acidic residues-rich tracts occupy residues Val-457 to Asp-480 and Lys-493 to Ser-502. Disordered stretches follow at residues Val-457 to Gln-629 and Ser-761 to Gly-789. Ser-474 bears the Phosphoserine mark. Positions Thr-533–Ser-548 are enriched in low complexity. Over residues Lys-550–Thr-576 the composition is skewed to basic and acidic residues. Ser-555 bears the Phosphoserine mark. Residues Ser-583–Val-593 show a composition bias toward low complexity. Residues Glu-769 to Ser-782 show a composition bias toward polar residues. Ser-777 carries the phosphoserine modification. Residues Leu-974 to Met-1239 form the Protein kinase domain. ATP-binding positions include Leu-980–Val-988 and Lys-1001. Ser-1013 bears the Phosphoserine mark. The active-site Proton acceptor is the Asp-1102.

It belongs to the protein kinase superfamily. Ser/Thr protein kinase family. In terms of processing, hyperphosphorylated in response to auxin in an ABP1- and TMK1-dependent manner.

It localises to the cytoplasm. The enzyme catalyses L-seryl-[protein] + ATP = O-phospho-L-seryl-[protein] + ADP + H(+). It carries out the reaction L-threonyl-[protein] + ATP = O-phospho-L-threonyl-[protein] + ADP + H(+). Activated by auxin via rapid phosphorylation downstream of ABP1 and TMK1 signaling. RAF-like protein kinase acting, together with RAF20, as a central mediator of a fast response pathway to auxin involving proteins phosphorylation, and leading to rapid cellular responses including membrane depolarization and cytoplasmic streaming. Required for general growth and developmental process. The protein is RAF-like serine/threonine-protein kinase 24 of Arabidopsis thaliana (Mouse-ear cress).